Reading from the N-terminus, the 491-residue chain is Nicotinamide phosphoribosyltransferase (491 aa).

Met1 is subject to N-acetylmethionine. Residue Tyr188 is modified to Phosphotyrosine. Residue Arg196 participates in diphosphate binding. Residue Asp219 participates in beta-nicotinamide D-ribonucleotide binding. Diphosphate contacts are provided by His247 and Arg311. Beta-nicotinamide D-ribonucleotide is bound by residues Arg311–Asp313, Gly353–Asp354, Gly384, and Arg392. Ser472 is subject to Phosphoserine.

The protein belongs to the NAPRTase family. Homodimer.

It is found in the nucleus. The protein resides in the cytoplasm. The protein localises to the secreted. It catalyses the reaction beta-nicotinamide D-ribonucleotide + diphosphate = 5-phospho-alpha-D-ribose 1-diphosphate + nicotinamide + H(+). It participates in cofactor biosynthesis; NAD(+) biosynthesis; nicotinamide D-ribonucleotide from 5-phospho-alpha-D-ribose 1-diphosphate and nicotinamide: step 1/1. Its function is as follows. Catalyzes the condensation of nicotinamide with 5-phosphoribosyl-1-pyrophosphate to yield nicotinamide mononucleotide, an intermediate in the biosynthesis of NAD. It is the rate limiting component in the mammalian NAD biosynthesis pathway. The secreted form behaves both as a cytokine with immunomodulating properties and an adipokine with anti-diabetic properties, it has no enzymatic activity, partly because of lack of activation by ATP, which has a low level in extracellular space and plasma. Plays a role in the modulation of circadian clock function. Plays a role in the modulation of circadian clock function. NAMPT-dependent oscillatory production of NAD regulates oscillation of clock target gene expression by releasing the core clock component: CLOCK-BMAL1 heterodimer from NAD-dependent SIRT1-mediated suppression. The polypeptide is Nicotinamide phosphoribosyltransferase (NAMPT) (Sus scrofa (Pig)).